Here is a 295-residue protein sequence, read N- to C-terminus: Pyridoxal 5'-phosphate synthase subunit PdxS (295 aa).

Residue Asp-25 coordinates D-ribose 5-phosphate. The active-site Schiff-base intermediate with D-ribose 5-phosphate is Lys-82. Residue Gly-154 coordinates D-ribose 5-phosphate. Arg-166 provides a ligand contact to D-glyceraldehyde 3-phosphate. D-ribose 5-phosphate contacts are provided by residues Gly-215 and 236 to 237 (GS).

It belongs to the PdxS/SNZ family. In the presence of PdxT, forms a dodecamer of heterodimers.

The catalysed reaction is aldehydo-D-ribose 5-phosphate + D-glyceraldehyde 3-phosphate + L-glutamine = pyridoxal 5'-phosphate + L-glutamate + phosphate + 3 H2O + H(+). It participates in cofactor biosynthesis; pyridoxal 5'-phosphate biosynthesis. Functionally, catalyzes the formation of pyridoxal 5'-phosphate from ribose 5-phosphate (RBP), glyceraldehyde 3-phosphate (G3P) and ammonia. The ammonia is provided by the PdxT subunit. Can also use ribulose 5-phosphate and dihydroxyacetone phosphate as substrates, resulting from enzyme-catalyzed isomerization of RBP and G3P, respectively. This Bacillus cereus (strain Q1) protein is Pyridoxal 5'-phosphate synthase subunit PdxS.